The sequence spans 92 residues: Alpha-elapitoxin-As2a (92 aa).

The N-terminal stretch at 1 to 21 (MKTLLLTLVVVTIVCLDLGDG) is a signal peptide. 5 disulfides stabilise this stretch: cysteine 24-cysteine 41, cysteine 34-cysteine 62, cysteine 47-cysteine 51, cysteine 66-cysteine 77, and cysteine 78-cysteine 83.

It belongs to the three-finger toxin family. Long-chain subfamily. Type II alpha-neurotoxin sub-subfamily. Expressed by the venom gland.

It is found in the secreted. In terms of biological role, binds with high affinity to muscular (alpha-1/CHRNA1) and neuronal (alpha-7/CHRNA7) nicotinic acetylcholine receptor (nAChR) and inhibits acetylcholine from binding to the receptor, thereby impairing neuromuscular and neuronal transmission. This is Alpha-elapitoxin-As2a from Austrelaps superbus (Lowland copperhead snake).